The primary structure comprises 226 residues: Large ribosomal subunit protein uL1 (226 aa).

This sequence belongs to the universal ribosomal protein uL1 family. As to quaternary structure, part of the 50S ribosomal subunit.

Binds directly to 23S rRNA. The L1 stalk is quite mobile in the ribosome, and is involved in E site tRNA release. Functionally, protein L1 is also a translational repressor protein, it controls the translation of the L11 operon by binding to its mRNA. The polypeptide is Large ribosomal subunit protein uL1 (Mycoplasma genitalium (strain ATCC 33530 / DSM 19775 / NCTC 10195 / G37) (Mycoplasmoides genitalium)).